The sequence spans 508 residues: ATP synthase subunit alpha, mitochondrial (508 aa).

Residue 171 to 178 (GDRQTGKT) participates in ATP binding.

It belongs to the ATPase alpha/beta chains family. As to quaternary structure, F-type ATPases have 2 components, CF(1) - the catalytic core - and CF(0) - the membrane proton channel. CF(1) has five subunits: alpha(3), beta(3), gamma(1), delta(1), epsilon(1). CF(0) has three main subunits: a, b and c.

Its subcellular location is the mitochondrion. The protein resides in the mitochondrion inner membrane. Functionally, mitochondrial membrane ATP synthase (F(1)F(0) ATP synthase or Complex V) produces ATP from ADP in the presence of a proton gradient across the membrane which is generated by electron transport complexes of the respiratory chain. F-type ATPases consist of two structural domains, F(1) - containing the extramembraneous catalytic core, and F(0) - containing the membrane proton channel, linked together by a central stalk and a peripheral stalk. During catalysis, ATP synthesis in the catalytic domain of F(1) is coupled via a rotary mechanism of the central stalk subunits to proton translocation. Subunits alpha and beta form the catalytic core in F(1). Rotation of the central stalk against the surrounding alpha(3)beta(3) subunits leads to hydrolysis of ATP in three separate catalytic sites on the beta subunits. Subunit alpha does not bear the catalytic high-affinity ATP-binding sites. This chain is ATP synthase subunit alpha, mitochondrial (ATPA), found in Zea mays (Maize).